The following is a 433-amino-acid chain: Deoxyguanosinetriphosphate triphosphohydrolase-like protein 2 (433 aa).

The region spanning 61 to 248 (RLTHSLEVAQ…METADDIAYT (188 aa)) is the HD domain.

The protein belongs to the dGTPase family. Type 2 subfamily.

The chain is Deoxyguanosinetriphosphate triphosphohydrolase-like protein 2 from Deinococcus radiodurans (strain ATCC 13939 / DSM 20539 / JCM 16871 / CCUG 27074 / LMG 4051 / NBRC 15346 / NCIMB 9279 / VKM B-1422 / R1).